We begin with the raw amino-acid sequence, 1019 residues long: Phosphatidylinositol 3,4,5-trisphosphate 5-phosphatase 1 (1019 aa).

The SH2 domain maps to 5–101; the sequence is WYHGNITRSK…GLVTHLQYPI (97 aa). Residues 103–116 are compositionally biased toward acidic residues; it reads KEEEGPEEPDEEQE. Disordered stretches follow at residues 103-133 and 909-1019; these read KEEE…TPPS and ETQN…PPTA. An SH3-binding 1 motif is present at residues 120-125; the sequence is PNVPPR. Composition is skewed to polar residues over residues 909 to 931 and 958 to 980; these read ETQN…KQSP and PITS…TNRT. An SH3-binding 2 motif is present at residues 966–971; the sequence is TLSTQK. The NPXY motif signature appears at 1004–1007; sequence NPLY. A Phosphotyrosine modification is found at Y1007. Over residues 1010–1019 the composition is skewed to polar residues; the sequence is VNNTLYPPTA.

This sequence belongs to the inositol 1,4,5-trisphosphate 5-phosphatase family. In terms of processing, tyrosine phosphorylated by the members of the SRC family after exposure to a diverse array of extracellular stimuli.

It is found in the cytoplasm. The protein resides in the cell membrane. Its subcellular location is the membrane raft. It localises to the cytoskeleton. It catalyses the reaction a 1,2-diacyl-sn-glycero-3-phospho-(1D-myo-inositol-3,4,5-trisphosphate) + H2O = a 1,2-diacyl-sn-glycero-3-phospho-(1D-myo-inositol-3,4-bisphosphate) + phosphate. It carries out the reaction 1D-myo-inositol 1,3,4,5-tetrakisphosphate + H2O = 1D-myo-inositol 1,3,4-trisphosphate + phosphate. The catalysed reaction is a 1,2-diacyl-sn-glycero-3-phospho-(1D-myo-inositol-4,5-bisphosphate) + H2O = a 1,2-diacyl-sn-glycero-3-phospho-(1D-myo-inositol 4-phosphate) + phosphate. Functionally, phosphatidylinositol (PtdIns) phosphatase that specifically hydrolyzes the 5-phosphate of phosphatidylinositol-3,4,5-trisphosphate (PtdIns(3,4,5)P3) to produce PtdIns(3,4)P2, thereby negatively regulating the PI3K (phosphoinositide 3-kinase) pathways. Able also to hydrolyzes the 5-phosphate of phosphatidylinositol-4,5-bisphosphate (PtdIns(4,5)P3) and inositol 1,3,4,5-tetrakisphosphate. Acts as a negative regulator of B-cell antigen receptor signaling. Mediates signaling from the FC-gamma-RIIB receptor (FCGR2B), playing a central role in terminating signal transduction from activating immune/hematopoietic cell receptor systems. Acts as a negative regulator of myeloid cell proliferation/survival and chemotaxis, mast cell degranulation, immune cells homeostasis, integrin alpha-IIb/beta-3 signaling in platelets and JNK signaling in B-cells. This is Phosphatidylinositol 3,4,5-trisphosphate 5-phosphatase 1 (inpp5d) from Xenopus laevis (African clawed frog).